The sequence spans 366 residues: Leucine dehydrogenase (366 aa).

Lys-80 is an active-site residue. 180–186 contacts NAD(+); the sequence is GVGHVAY.

This sequence belongs to the Glu/Leu/Phe/Val dehydrogenases family. As to quaternary structure, homooctamer.

It catalyses the reaction L-leucine + NAD(+) + H2O = 4-methyl-2-oxopentanoate + NH4(+) + NADH + H(+). The protein operates within amino-acid degradation; L-leucine degradation; 4-methyl-2-oxopentanoate from L-leucine (dehydrogenase route): step 1/1. With respect to regulation, inhibited by pyridoxal phosphate. In terms of biological role, catalyzes the reversible deamination of L-leucine to 4-methyl-2-oxopentanoate. Exhibits the highest activity with L-leucine as substrate, but can also use other L-amino acids such as L-isoleucine, L-valine and L-2-aminovaleric acid. All of the oxo analogs of the amino acid substrates serve as good substrates for the reverse reaction. In Thermoactinomyces intermedius, this protein is Leucine dehydrogenase (ldh).